The following is a 325-amino-acid chain: N-acetyl-gamma-glutamyl-phosphate reductase (325 aa).

C135 is a catalytic residue.

This sequence belongs to the NAGSA dehydrogenase family. Type 1 subfamily.

The protein localises to the cytoplasm. It catalyses the reaction N-acetyl-L-glutamate 5-semialdehyde + phosphate + NADP(+) = N-acetyl-L-glutamyl 5-phosphate + NADPH + H(+). The protein operates within amino-acid biosynthesis; L-arginine biosynthesis; N(2)-acetyl-L-ornithine from L-glutamate: step 3/4. Its function is as follows. Catalyzes the NADPH-dependent reduction of N-acetyl-5-glutamyl phosphate to yield N-acetyl-L-glutamate 5-semialdehyde. The protein is N-acetyl-gamma-glutamyl-phosphate reductase of Karelsulcia muelleri (strain GWSS) (Sulcia muelleri).